A 505-amino-acid chain; its full sequence is Olfactomedin-4 (505 aa).

Residues 1–18 (MSYSLLFLLALQFCLGSA) form the signal peptide. Residues N64 and N128 are each glycosylated (N-linked (GlcNAc...) asparagine). The stretch at 174–225 (HIIDMLEVEIRNMTLLVEKLESLDQNNVLSIRRQILALKTKLKECEASKSDL) forms a coiled coil. Residues 237–499 (SCSHGGVVNI…LLNYDLVFLQ (263 aa)) enclose the Olfactomedin-like domain. C238 and C429 are oxidised to a cystine.

Homomultimer; disulfide-linked. Interacts with NDUFA13. Interacts with cell surface lectins (locutions ricinus communis agglutinin I, concanavalin A and wheat germ agglutinin) and cadherin. Post-translationally, N-glycosylated.

It is found in the secreted. The protein resides in the extracellular space. The protein localises to the mitochondrion. May promote proliferation of pancreatic cancer cells by favoring the transition from the S to G2/M phase. In myeloid leukemic cell lines, inhibits cell growth and induces cell differentiation and apoptosis. May play a role in the inhibition of EIF4EBP1 phosphorylation/deactivation. Facilitates cell adhesion, most probably through interaction with cell surface lectins and cadherin. In Mus musculus (Mouse), this protein is Olfactomedin-4 (Olfm4).